We begin with the raw amino-acid sequence, 103 residues long: Large ribosomal subunit protein bL21 (103 aa).

It belongs to the bacterial ribosomal protein bL21 family. Part of the 50S ribosomal subunit. Contacts protein L20.

Its function is as follows. This protein binds to 23S rRNA in the presence of protein L20. This chain is Large ribosomal subunit protein bL21, found in Azoarcus sp. (strain BH72).